The following is a 443-amino-acid chain: Mevalonate kinase (443 aa).

Residues Lys-12, Ser-138, and 143–149 each bind ATP; that span reads GAGLGSS. Mg(2+)-binding residues include Ser-149 and Glu-191. Catalysis depends on Asp-202, which acts as the Proton acceptor.

This sequence belongs to the GHMP kinase family. Mevalonate kinase subfamily. In terms of assembly, homodimer. Mg(2+) serves as cofactor.

It localises to the cytoplasm. It is found in the cytosol. The catalysed reaction is (R)-mevalonate + ATP = (R)-5-phosphomevalonate + ADP + H(+). It functions in the pathway isoprenoid biosynthesis; isopentenyl diphosphate biosynthesis via mevalonate pathway; isopentenyl diphosphate from (R)-mevalonate: step 1/3. With respect to regulation, farnesyl pyrophosphate and geranyl pyrophosphate inhibit mevalonate kinase by binding competitively at the ATP-binding site. Functionally, mevalonate kinase; part of the second module of ergosterol biosynthesis pathway that includes the middle steps of the pathway. ERG12 converts mevalonate into 5-phosphomevalonate. The second module is carried out in the vacuole and involves the formation of farnesyl diphosphate, which is also an important intermediate in the biosynthesis of ubiquinone, dolichol, heme and prenylated proteins. Activity by the mevalonate kinase ERG12 first converts mevalonate into 5-phosphomevalonate. 5-phosphomevalonate is then further converted to 5-diphosphomevalonate by the phosphomevalonate kinase ERG8. The diphosphomevalonate decarboxylase MVD1/ERG19 then produces isopentenyl diphosphate. The isopentenyl-diphosphate delta-isomerase IDI1 then catalyzes the 1,3-allylic rearrangement of the homoallylic substrate isopentenyl (IPP) to its highly electrophilic allylic isomer, dimethylallyl diphosphate (DMAPP). Finally the farnesyl diphosphate synthase ERG20 catalyzes the sequential condensation of isopentenyl pyrophosphate with dimethylallyl pyrophosphate, and then with the resultant geranylpyrophosphate to the ultimate product farnesyl pyrophosphate. The sequence is that of Mevalonate kinase from Saccharomyces cerevisiae (strain ATCC 204508 / S288c) (Baker's yeast).